The chain runs to 1025 residues: Multidrug resistance protein MdtC (1025 aa).

A run of 12 helical transmembrane segments spans residues 3–23, 333–353, 360–380, 387–407, 431–451, 463–483, 528–548, 853–873, 875–895, 897–917, 953–973, and 984–1004; these read FFAL…AITL, EVEQ…FLFL, IIPA…MYLC, LSLM…IVVL, VGFT…PLLL, FAVT…TLTP, LVGV…ISIP, VILI…LYES, VHPL…LLAL, LFNA…IGIV, PIMM…LSGG, and ITIV…TPVV.

It belongs to the resistance-nodulation-cell division (RND) (TC 2.A.6) family. MdtC subfamily. Part of a tripartite efflux system composed of MdtA, MdtB and MdtC. MdtC forms a heteromultimer with MdtB.

The protein localises to the cell inner membrane. The MdtABC tripartite complex confers resistance against novobiocin and deoxycholate. This Escherichia coli O8 (strain IAI1) protein is Multidrug resistance protein MdtC.